The following is an 810-amino-acid chain: DNA gyrase subunit A (810 aa).

Residues 36–502 form the Topo IIA-type catalytic domain; sequence LPDVRDGLKP…EVLKTSMSDL (467 aa). Y124 functions as the O-(5'-phospho-DNA)-tyrosine intermediate in the catalytic mechanism. The GyrA-box motif lies at 529-535; that stretch reads QGIGGKG.

This sequence belongs to the type II topoisomerase GyrA/ParC subunit family. In terms of assembly, heterotetramer, composed of two GyrA and two GyrB chains. In the heterotetramer, GyrA contains the active site tyrosine that forms a transient covalent intermediate with DNA, while GyrB binds cofactors and catalyzes ATP hydrolysis.

It is found in the cytoplasm. It carries out the reaction ATP-dependent breakage, passage and rejoining of double-stranded DNA.. Functionally, a type II topoisomerase that negatively supercoils closed circular double-stranded (ds) DNA in an ATP-dependent manner to modulate DNA topology and maintain chromosomes in an underwound state. Negative supercoiling favors strand separation, and DNA replication, transcription, recombination and repair, all of which involve strand separation. Also able to catalyze the interconversion of other topological isomers of dsDNA rings, including catenanes and knotted rings. Type II topoisomerases break and join 2 DNA strands simultaneously in an ATP-dependent manner. The chain is DNA gyrase subunit A from Borrelia hermsii (strain HS1 / DAH).